The chain runs to 624 residues: Atypical kinase COQ8B, mitochondrial (624 aa).

The interval 90–117 (EMPPDFSSKDGRGETSETPVGAATGTIK) is disordered. A helical membrane pass occupies residues 189–205 (LANFGGLAVGLGIGAIA). The short motif at 249 to 252 (KIGQ) is the KxGQ motif element. A Protein kinase domain is found at 285-517 (MHKVLEEELG…ATVLKKSKDL (233 aa)). The short motif at 310–313 (AAAS) is the AAAS motif element. Residues serine 313, lysine 331, and 418 to 421 (MELV) contribute to the ATP site. Catalysis depends on aspartate 461, which acts as the Proton acceptor. Positions 466 and 480 each coordinate ATP.

Belongs to the protein kinase superfamily. ADCK protein kinase family. Homodimer; homodimerizes via its transmembrane region. Interacts with the multi-subunit COQ enzyme complex.

The protein resides in the mitochondrion membrane. It localises to the cytoplasm. The protein localises to the cytosol. Its subcellular location is the cell membrane. The protein operates within cofactor biosynthesis; ubiquinone biosynthesis. In terms of biological role, atypical kinase involved in the biosynthesis of coenzyme Q, also named ubiquinone, an essential lipid-soluble electron transporter for aerobic cellular respiration. Its substrate specificity is still unclear: may act as a protein kinase that mediates phosphorylation of COQ3. According to other reports, acts as a small molecule kinase, possibly a lipid kinase that phosphorylates a prenyl lipid in the ubiquinone biosynthesis pathway, as suggested by its ability to bind coenzyme Q lipid intermediates. However, the small molecule kinase activity was not confirmed by another publication. Required for podocyte migration. This is Atypical kinase COQ8B, mitochondrial from Danio rerio (Zebrafish).